Reading from the N-terminus, the 242-residue chain is Tropomyosin-1 (242 aa).

2 disordered regions span residues 1 to 31 (MDAIKKKMSAMKTKLEEADKQAQDAEDELTA) and 65 to 96 (TSLTEKYNEEEKKAEEGRRAHKELENRGQTDY). Residues 1–242 (MDAIKKKMSA…DELLLELASM (242 aa)) adopt a coiled-coil conformation. Composition is skewed to basic and acidic residues over residues 13–23 (TKLEEADKQAQ) and 70–96 (KYNEEEKKAEEGRRAHKELENRGQTDY).

The protein belongs to the tropomyosin family. In terms of assembly, homodimer. Expressed ubiquitously.

The chain is Tropomyosin-1 (TPM1) from Podocoryna carnea (Hydrozoan).